Reading from the N-terminus, the 96-residue chain is Small ribosomal subunit protein bS18 (96 aa).

Residues 1 to 20 (MSHGGKRRSGDGGSEGSSYS) form a disordered region.

This sequence belongs to the bacterial ribosomal protein bS18 family. As to quaternary structure, part of the 30S ribosomal subunit. Forms a tight heterodimer with protein bS6.

Its function is as follows. Binds as a heterodimer with protein bS6 to the central domain of the 16S rRNA, where it helps stabilize the platform of the 30S subunit. This Anaplasma phagocytophilum (strain HZ) protein is Small ribosomal subunit protein bS18.